The primary structure comprises 253 residues: ATP synthase subunit b 2 (253 aa).

Residues 9 to 27 (VLEIVNFLVLVWLLKRFLY) traverse the membrane as a helical segment.

Belongs to the ATPase B chain family. In terms of assembly, F-type ATPases have 2 components, F(1) - the catalytic core - and F(0) - the membrane proton channel. F(1) has five subunits: alpha(3), beta(3), gamma(1), delta(1), epsilon(1). F(0) has three main subunits: a(1), b(2) and c(10-14). The alpha and beta chains form an alternating ring which encloses part of the gamma chain. F(1) is attached to F(0) by a central stalk formed by the gamma and epsilon chains, while a peripheral stalk is formed by the delta and b chains.

It is found in the cell inner membrane. F(1)F(0) ATP synthase produces ATP from ADP in the presence of a proton or sodium gradient. F-type ATPases consist of two structural domains, F(1) containing the extramembraneous catalytic core and F(0) containing the membrane proton channel, linked together by a central stalk and a peripheral stalk. During catalysis, ATP synthesis in the catalytic domain of F(1) is coupled via a rotary mechanism of the central stalk subunits to proton translocation. Functionally, component of the F(0) channel, it forms part of the peripheral stalk, linking F(1) to F(0). This chain is ATP synthase subunit b 2, found in Methylococcus capsulatus (strain ATCC 33009 / NCIMB 11132 / Bath).